Reading from the N-terminus, the 182-residue chain is Endoribonuclease YbeY (182 aa).

Zn(2+) contacts are provided by H115, H119, and H125.

Belongs to the endoribonuclease YbeY family. It depends on Zn(2+) as a cofactor.

The protein localises to the cytoplasm. In terms of biological role, single strand-specific metallo-endoribonuclease involved in late-stage 70S ribosome quality control and in maturation of the 3' terminus of the 16S rRNA. This is Endoribonuclease YbeY from Bifidobacterium longum subsp. infantis (strain ATCC 15697 / DSM 20088 / JCM 1222 / NCTC 11817 / S12).